Reading from the N-terminus, the 169-residue chain is Large ribosomal subunit protein uL10 (169 aa).

It belongs to the universal ribosomal protein uL10 family. Part of the 50S ribosomal subunit.

The polypeptide is Large ribosomal subunit protein uL10 (rplJ) (Deinococcus radiodurans (strain ATCC 13939 / DSM 20539 / JCM 16871 / CCUG 27074 / LMG 4051 / NBRC 15346 / NCIMB 9279 / VKM B-1422 / R1)).